A 370-amino-acid chain; its full sequence is ADP-ribosylhydrolase ARH3 (370 aa).

E47 is a Mg(2+) binding site. T70 carries the phosphothreonine modification. Mg(2+) contacts are provided by T82, D83, and D84. Position 83 (D83) interacts with substrate. Residues 152–158 (KGSYGNG), H188, L241, and I277 contribute to the substrate site. Mg(2+) contacts are provided by D320, D322, and T323.

It belongs to the ADP-ribosylglycohydrolase family. In terms of assembly, monomer. Mg(2+) is required as a cofactor. In terms of tissue distribution, ubiquitous.

It is found in the nucleus. It localises to the cytoplasm. The protein resides in the chromosome. Its subcellular location is the mitochondrion matrix. The enzyme catalyses [(1''-&gt;2')-ADP-alpha-D-ribose](n) + H2O = [(1''-&gt;2')-ADP-alpha-D-ribose](n-1) + ADP-D-ribose. It catalyses the reaction 1''-O-acetyl-ADP-alpha-D-ribose + H2O = ADP-D-ribose + acetate + H(+). It carries out the reaction O-(ADP-D-ribosyl)-L-seryl-[protein] + H2O = ADP-D-ribose + L-seryl-[protein]. The catalysed reaction is alpha-NAD(+) + H2O = ADP-D-ribose + nicotinamide + H(+). The protein undergoes a dramatic conformational switch from closed to open states upon substrate-binding, which enables specific substrate recognition for the 1''-O-linkage. The glutamate flap (Glu-47) blocks substrate entrance to Mg(2+) in the unliganded closed state. In presence of substrate, Glu-47 is ejected from the active site: this closed-to-open transition significantly widens the substrate-binding channel and precisely positions the scissile 1''-O-linkage for cleavage while securing tightly 2'- and 3'-hydroxyls of ADP-ribose. ADP-ribosylhydrolase that preferentially hydrolyzes the scissile alpha-O-linkage attached to the anomeric C1'' position of ADP-ribose and acts on different substrates, such as proteins ADP-ribosylated on serine and threonine, free poly(ADP-ribose) and O-acetyl-ADP-D-ribose. Specifically acts as a serine mono-ADP-ribosylhydrolase by mediating the removal of mono-ADP-ribose attached to serine residues on proteins, thereby playing a key role in DNA damage response. Serine ADP-ribosylation of proteins constitutes the primary form of ADP-ribosylation of proteins in response to DNA damage. Does not hydrolyze ADP-ribosyl-arginine, -cysteine, -diphthamide, or -asparagine bonds. Also able to degrade protein free poly(ADP-ribose), which is synthesized in response to DNA damage: free poly(ADP-ribose) acts as a potent cell death signal and its degradation by ADPRHL2 protects cells from poly(ADP-ribose)-dependent cell death, a process named parthanatos. Also hydrolyzes free poly(ADP-ribose) in mitochondria. Specifically digests O-acetyl-ADP-D-ribose, a product of deacetylation reactions catalyzed by sirtuins. Specifically degrades 1''-O-acetyl-ADP-D-ribose isomer, rather than 2''-O-acetyl-ADP-D-ribose or 3''-O-acetyl-ADP-D-ribose isomers. The chain is ADP-ribosylhydrolase ARH3 (Adprs) from Mus musculus (Mouse).